Here is a 1046-residue protein sequence, read N- to C-terminus: MAGKARVHELAKELGVDSKTVLAKLKDLGEFVKSASSTVEAPVVRKLKEAFPAEGSAPSSRPGGRPGNGARPMPPPRPGPAIGRPGPGSGTGPRPGPGGRPVPGRPGPAPLPGASRPSTPTAAPQSQPAQTQPPQSQPVAPQPSQAPRPAAAAASAAAPAPAPSAPAPAPSAPAPAPITSAPTAATPPAAPQRPTPGGPRPGPAAPGRPRTGGPGGPGGPGGGPRPGPRPGPRPAAPGNNPYTSPAAGPRAASGQGGSPSAPPRPGAPRPGGPRPGGPRPGGPGGQRPSPGQMPPRPGGSGGPRPTPGQMPPRPGGSGGPRPNSNMFQPRPAGGAPGRPGGGGGPGRPGGGGGGPRPGGGGFAPRGGAPGRPGGGGGAPGRPGGGGPGGGGRPAAGGRGRGGTTAGAFGPGGRGRPGRQRKSKRAKRQEWESGLEAPRMGAMVPRGNGQAIRLPRGASLADFADKIDANPGALVQVVFTQLGEMVTATQSCTDETLQLLGVTLGYEVQIVSPEDEDKELLESFDLSFGGDYADDVELSARPPVVTVMGHVDHGKTKLLDAIRSTDVVGGEAGGITQHIGAYQVRAVVDGTERPITFIDTPGHETFTAMRARGAQVTDIVVLVVAADDGVKPQTIEALNHAQAANVPIVVAVNKVDKEGADPAKVRGQLTEYGLVAEEYGGDTMFVDVSARNRTGIDELTEAVILTADASLDLRAPTGTEAQGVAIEGRLDRGRGPVATVLVQRGTLRIGDSVVAGEAFGRVRAMLDENGAQVSEAGPARPVQVLGFTSVPDAGDNFLVVPEDRVARQIAERRQARERNAELALSRGRPTLETILERMKEGEKTQLNLILKGDVSGSVEALEDALLKIDVGDEVGLRIIDRGVGAITETNVMLASASDAVIIGFNVRPQGKATELADREGVEVRYYSVIYQAIEDIENALKGMLKPVYEEAQLGTAEVREVFRVPRVGNVAGSLVRSGIIRRNTKARLIRDGVVVADNLTVESLKRFKDDATEVREGYECGIGLGSFNDIKVDDVIETFEQREVPRT.

The segment at 49 to 448 (EAFPAEGSAP…MGAMVPRGNG (400 aa)) is disordered. Residues 52–71 (PAEGSAPSSRPGGRPGNGAR) are compositionally biased toward low complexity. Residues 94-111 (RPGPGGRPVPGRPGPAPL) show a composition bias toward pro residues. Composition is skewed to low complexity over residues 112 to 139 (PGAS…SQPV) and 147 to 159 (PRPA…AAAP). Residues 160 to 176 (APAPSAPAPAPSAPAPA) show a composition bias toward pro residues. The span at 177 to 187 (PITSAPTAATP) shows a compositional bias: low complexity. A compositionally biased stretch (pro residues) spans 188 to 206 (PAAPQRPTPGGPRPGPAAP). Residues 210 to 222 (RTGGPGGPGGPGG) are compositionally biased toward gly residues. The span at 223–235 (GPRPGPRPGPRPA) shows a compositional bias: pro residues. Residues 244-253 (SPAAGPRAAS) are compositionally biased toward low complexity. 2 stretches are compositionally biased toward pro residues: residues 260 to 281 (SAPP…PRPG) and 304 to 314 (RPTPGQMPPRP). The span at 320–333 (PRPNSNMFQPRPAG) shows a compositional bias: low complexity. A compositionally biased stretch (gly residues) spans 334-414 (GAPGRPGGGG…AGAFGPGGRG (81 aa)). Over residues 415 to 426 (RPGRQRKSKRAK) the composition is skewed to basic residues. The region spanning 539 to 711 (ARPPVVTVMG…VILTADASLD (173 aa)) is the tr-type G domain. Residues 548–555 (GHVDHGKT) are G1. A GTP-binding site is contributed by 548–555 (GHVDHGKT). Positions 573 to 577 (GITQH) are G2. Residues 598 to 601 (DTPG) are G3. GTP contacts are provided by residues 598-602 (DTPGH) and 652-655 (NKVD). The G4 stretch occupies residues 652–655 (NKVD). The segment at 688 to 690 (SAR) is G5.

The protein belongs to the TRAFAC class translation factor GTPase superfamily. Classic translation factor GTPase family. IF-2 subfamily.

It is found in the cytoplasm. Its function is as follows. One of the essential components for the initiation of protein synthesis. Protects formylmethionyl-tRNA from spontaneous hydrolysis and promotes its binding to the 30S ribosomal subunits. Also involved in the hydrolysis of GTP during the formation of the 70S ribosomal complex. The sequence is that of Translation initiation factor IF-2 from Parafrankia sp. (strain EAN1pec).